The chain runs to 94 residues: Small ribosomal subunit protein uS19c (94 aa).

The protein belongs to the universal ribosomal protein uS19 family.

It localises to the plastid. Its function is as follows. Protein S19 forms a complex with S13 that binds strongly to the 16S ribosomal RNA. In Epifagus virginiana (Beechdrops), this protein is Small ribosomal subunit protein uS19c (rps19).